We begin with the raw amino-acid sequence, 512 residues long: MKKTTLLVILDGWGYSDSDYFNAIKNANTPTWDSIWQEFPKTLINASSLEVGLPRSQMGNSEVGHVNIGCGRVVYQELTKIDKAIEEKTFGDNKAICAAIDNAIKNDSNLHLIGLLSPGGVHSHEEHIFEMIKIAKQKGIKRLYLHAFLDGRDTPPRSAEKSIKKADKLLQDLNLGYIASVCGRYYAMDRDNRWDRVEKAYNAIVNANADFIYDSALEALEQSYARDQSDEFVIPTCIKKDGHLVKVQDNDSVIFMNFRADRAREISHAFTDESFDHFPRKKHLNINFTTLTEYDSKLKCAVAFPPEQPINTLGEVLMKNHKTQLRIAETEKYPHVTFFFNGGREEQFEGEDRILIPSPKVATYDLQPEMSAPEVTDKLVAAINSGKYDCIVCNYANSDMVGHTGNYEAAMQAIEYLDKCIARLKDAILEHDGNMFITADHGNADMMVNPETQKPHTAHTTNLVPFIYVGHKKAQVALEHGKLSDIAPTLLNVMGIAQPKEMTGKTIFNFEK.

The Mn(2+) site is built by Asp11 and Ser61. Catalysis depends on Ser61, which acts as the Phosphoserine intermediate. Substrate is bound by residues His122, 152–153 (RD), Arg184, Arg190, 259–262 (RADR), and Lys332. Positions 399, 403, 440, 441, and 459 each coordinate Mn(2+).

Belongs to the BPG-independent phosphoglycerate mutase family. In terms of assembly, monomer. Mn(2+) is required as a cofactor.

The catalysed reaction is (2R)-2-phosphoglycerate = (2R)-3-phosphoglycerate. The protein operates within carbohydrate degradation; glycolysis; pyruvate from D-glyceraldehyde 3-phosphate: step 3/5. In terms of biological role, catalyzes the interconversion of 2-phosphoglycerate and 3-phosphoglycerate. The protein is 2,3-bisphosphoglycerate-independent phosphoglycerate mutase of Francisella tularensis subsp. tularensis (strain FSC 198).